A 3029-amino-acid chain; its full sequence is Polycystin-1-related protein (3029 aa).

An N-terminal signal peptide occupies residues 1 to 21; that stretch reads MAKHLYLAFSLILVPFLVSKA. Topologically, residues 22–1685 are extracellular; sequence KQTSNGEVPW…RDTDKLKNSP (1664 aa). The WSC domain occupies 29–121; it reads VPWLVGCYRY…KNVASVYSTA (93 aa). 2 PKD domains span residues 364 to 450 and 546 to 634; these read EGHC…IKGV and DHLF…PECY. One can recognise an REJ domain in the interval 633–1476; the sequence is CYTRGVAIVG…NPYFSDMNHT (844 aa). Disordered regions lie at residues 754–773, 909–931, and 989–1051; these read RKGP…HPDE, CPSD…SNSP, and TSAI…PNKP. A compositionally biased stretch (polar residues) spans 918–931; it reads VTPSTTPMTDSNSP. A compositionally biased stretch (acidic residues) spans 997–1013; that stretch reads SGDVDDDEVNNDNDDDS. Residues 1020–1047 are compositionally biased toward polar residues; the sequence is TLPTPLSMTNANSVNKPIITTDTPSFNK. In terms of domain architecture, GAIN-B spans 1525–1671; the sequence is RNVHVINQTA…GFIQPPNSLH (147 aa). 2 disulfides stabilise this stretch: Cys1624/Cys1651 and Cys1639/Cys1653. The tract at residues 1624-1671 is GPS; the sequence is CFYWNKRGKHWASDGCRLEKSINHTLVCRCNHLTAFSGGFIQPPNSLH. Residues 1686–1706 traverse the membrane as a helical segment; sequence LTMVLVISILVMYFLLLGFCV. Over 1707–1895 the chain is Cytoplasmic; the sequence is KADRHDKKKL…SYSRFTRAQR (189 aa). In terms of domain architecture, PLAT spans 1733 to 1851; sequence SRFQLSVQTG…GNGKVECELF (119 aa). A helical transmembrane segment spans residues 1896 to 1916; it reads LSCCLSLLLSFLCVNIAWYRP. At 1917–1933 the chain is on the extracellular side; the sequence is KIEVTEVLGVLDVSANS. The helical transmembrane segment at 1934 to 1954 threads the bilayer; it reads IMIGVLGSLMVLPVNFLWIFF. Residues 1955-2101 are Cytoplasmic-facing; that stretch reads FRYSRRSLSR…YRSKFSLPHG (147 aa). The chain crosses the membrane as a helical span at residues 2102-2122; that stretch reads FVYVAWFGCLITGTVTSAITI. Topologically, residues 2123–2140 are extracellular; that stretch reads WYGLSFGWDLSVHWFQSL. Residues 2141–2161 form a helical membrane-spanning segment; it reads VFSLLESLLLSQPIMVLAFIF. Topologically, residues 2162 to 2250 are cytoplasmic; that stretch reads YMSHKTKSGK…SLKNRVLRNY (89 aa). A helical membrane pass occupies residues 2251 to 2271; sequence VVELFVFIMFFVVTCALVFSV. Residues 2272–2462 lie on the Extracellular side of the membrane; sequence ADPDVYHLNQ…GYSYFIRFTK (191 aa). Residues 2463–2483 form a helical membrane-spanning segment; sequence LLFVVFFLYLLQHEFFLALKM. Residues 2484 to 2496 are Cytoplasmic-facing; that stretch reads TFSYFTNFWRVYQ. A helical transmembrane segment spans residues 2497 to 2517; sequence LLTIAISSACIVSYIHWSLSL. Over 2518 to 2538 the chain is Extracellular; it reads YALLREVETERQSRVFYLSRQ. The helical transmembrane segment at 2539–2559 threads the bilayer; sequence ISWSQGFLQASYSLLLFLLLI. The Cytoplasmic portion of the chain corresponds to 2560–2586; it reads RCLHLLRPFRFVRHFGRILSTSISSLL. The helical transmembrane segment at 2587–2607 threads the bilayer; sequence ACWVFGFILVVAFAHPGYLLF. The Extracellular segment spans residues 2608 to 2651; it reads GSVHSSFKSFGDAFLLVTSFFRLEGVARYQDFALEEQTLLLSTY. Residues 2652–2672 traverse the membrane as a helical segment; sequence FALFLIGFCVIVRGSTAAVVL. At 2673-3029 the chain is on the cytoplasmic side; that stretch reads HGIRCLGKRR…PVGQRVVSAM (357 aa). The interval 2704-2726 is disordered; that stretch reads KKPKKPRPNSVSDLEETDDEDDL. Positions 2716–2726 are enriched in acidic residues; the sequence is DLEETDDEDDL.

This sequence belongs to the polycystin family. Heterodimer of 2 chains generated by proteolytic processing; the large extracellular N-terminal fragment and the membrane-bound C-terminal fragment predominantly remain associated and non-covalently linked. Autoproteolytically processed at the GPS region of the GAIN-B domain; this cleavage modulates receptor activity. In terms of tissue distribution, component of the acid-insoluble and acid-soluble organic matrix of the aragonitic skeleton (at protein level).

The protein localises to the membrane. This chain is Polycystin-1-related protein, found in Acropora millepora (Staghorn coral).